A 564-amino-acid polypeptide reads, in one-letter code: Dihydroxy-acid dehydratase (564 aa).

Residue cysteine 55 coordinates [2Fe-2S] cluster. Aspartate 87 lines the Mg(2+) pocket. Cysteine 128 is a [2Fe-2S] cluster binding site. Residues aspartate 129 and lysine 130 each coordinate Mg(2+). Lysine 130 carries the N6-carboxylysine modification. Cysteine 200 is a [2Fe-2S] cluster binding site. Glutamate 452 is a binding site for Mg(2+). Serine 478 functions as the Proton acceptor in the catalytic mechanism.

Belongs to the IlvD/Edd family. Homodimer. Requires [2Fe-2S] cluster as cofactor. It depends on Mg(2+) as a cofactor.

It carries out the reaction (2R)-2,3-dihydroxy-3-methylbutanoate = 3-methyl-2-oxobutanoate + H2O. The catalysed reaction is (2R,3R)-2,3-dihydroxy-3-methylpentanoate = (S)-3-methyl-2-oxopentanoate + H2O. It participates in amino-acid biosynthesis; L-isoleucine biosynthesis; L-isoleucine from 2-oxobutanoate: step 3/4. Its pathway is amino-acid biosynthesis; L-valine biosynthesis; L-valine from pyruvate: step 3/4. Functions in the biosynthesis of branched-chain amino acids. Catalyzes the dehydration of (2R,3R)-2,3-dihydroxy-3-methylpentanoate (2,3-dihydroxy-3-methylvalerate) into 2-oxo-3-methylpentanoate (2-oxo-3-methylvalerate) and of (2R)-2,3-dihydroxy-3-methylbutanoate (2,3-dihydroxyisovalerate) into 2-oxo-3-methylbutanoate (2-oxoisovalerate), the penultimate precursor to L-isoleucine and L-valine, respectively. The protein is Dihydroxy-acid dehydratase of Polaromonas naphthalenivorans (strain CJ2).